Here is a 360-residue protein sequence, read N- to C-terminus: Lipid-A-disaccharide synthase (360 aa).

This sequence belongs to the LpxB family.

The enzyme catalyses a lipid X + a UDP-2-N,3-O-bis[(3R)-3-hydroxyacyl]-alpha-D-glucosamine = a lipid A disaccharide + UDP + H(+). It functions in the pathway bacterial outer membrane biogenesis; LPS lipid A biosynthesis. In terms of biological role, condensation of UDP-2,3-diacylglucosamine and 2,3-diacylglucosamine-1-phosphate to form lipid A disaccharide, a precursor of lipid A, a phosphorylated glycolipid that anchors the lipopolysaccharide to the outer membrane of the cell. The polypeptide is Lipid-A-disaccharide synthase (Helicobacter acinonychis (strain Sheeba)).